A 1238-amino-acid polypeptide reads, in one-letter code: Virulence sensor protein BvgS (1238 aa).

Positions 1–32 (MPAPHRLYPRSLICLAQALLVWALLAWAPAQA) are cleaved as a signal peptide. The Cytoplasmic portion of the chain corresponds to 33–307 (SQELTLVGKA…REQQWMANHP (275 aa)). The helical transmembrane segment at 308 to 331 (VVKVAVLNLFAPFTLFRTDEQFGG) threads the bilayer. The Periplasmic segment spans residues 332-541 (ISAAVLQLLQ…PRTWYAYRNE (210 aa)). The helical transmembrane segment at 542–563 (IYLLIGLGLLSALLFLSWIVYL) threads the bilayer. Residues 564-1238 (RRQIRQRKRA…LEQRPHQGQP (675 aa)) are Cytoplasmic-facing. A PAS domain is found at 580-651 (QLEFMRVLID…MHEFLLTRMA (72 aa)). Positions 652-708 (AEREPRFEDRDVTLHGRTRHVYQWTVPYGDSLGELKGIIGGWIDITERAELLRELHD) constitute a PAC domain. In terms of domain architecture, Histidine kinase spans 726-948 (TMSHEIRTPM…TVSVDLRLTM (223 aa)). His-729 bears the Phosphohistidine; by autocatalysis mark. Positions 974–1095 (RVLVVDDHKP…ALRQRLNEAA (122 aa)) constitute a Response regulatory domain. Asp-1023 bears the 4-aspartylphosphate mark. One can recognise an HPt domain in the interval 1133-1228 (DEALIRQLLE…AALETQLRAW (96 aa)). His-1172 carries the phosphohistidine modification.

Activation requires a sequential transfer of a phosphate group from a His in the primary transmitter domain, to an Asp in the receiver domain and to a His in the secondary transmitter domain.

The protein resides in the cell inner membrane. It carries out the reaction ATP + protein L-histidine = ADP + protein N-phospho-L-histidine.. In terms of biological role, member of the two-component regulatory system BvgS/BvgA. Phosphorylates BvgA via a four-step phosphorelay in response to environmental signals. The sequence is that of Virulence sensor protein BvgS (bvgS) from Bordetella parapertussis (strain 12822 / ATCC BAA-587 / NCTC 13253).